A 462-amino-acid chain; its full sequence is Na(+)/H(+) antiporter NhaA (462 aa).

11 helical membrane-spanning segments follow: residues 24–44 (ISGL…NLPL), 66–86 (LPIG…TVGL), 102–122 (AAAV…ILFL), 156–176 (GWAV…ALFA), 196–216 (LLAI…YWFI), 235–255 (PWIA…EAGI), 256–275 (HPTL…VMHG), 290–310 (PFSA…VHFE), 312–332 (MSPL…LVVG), 361–381 (MIPA…IASL), and 392–412 (ARFG…VLLS).

The protein belongs to the NhaA Na(+)/H(+) (TC 2.A.33) antiporter family.

It localises to the cell membrane. The enzyme catalyses Na(+)(in) + 2 H(+)(out) = Na(+)(out) + 2 H(+)(in). Na(+)/H(+) antiporter that extrudes sodium in exchange for external protons. The protein is Na(+)/H(+) antiporter NhaA of Bifidobacterium breve (strain NCIMB 8807 / UCC2003).